Consider the following 318-residue polypeptide: Acetyl-coenzyme A carboxylase carboxyl transferase subunit alpha (318 aa).

The region spanning 39–297 is the CoA carboxyltransferase C-terminal domain; sequence RLEKRSQTAL…SEALKAMVGK (259 aa).

It belongs to the AccA family. As to quaternary structure, acetyl-CoA carboxylase is a heterohexamer composed of biotin carboxyl carrier protein (AccB), biotin carboxylase (AccC) and two subunits each of ACCase subunit alpha (AccA) and ACCase subunit beta (AccD).

The protein localises to the cytoplasm. The catalysed reaction is N(6)-carboxybiotinyl-L-lysyl-[protein] + acetyl-CoA = N(6)-biotinyl-L-lysyl-[protein] + malonyl-CoA. The protein operates within lipid metabolism; malonyl-CoA biosynthesis; malonyl-CoA from acetyl-CoA: step 1/1. Component of the acetyl coenzyme A carboxylase (ACC) complex. First, biotin carboxylase catalyzes the carboxylation of biotin on its carrier protein (BCCP) and then the CO(2) group is transferred by the carboxyltransferase to acetyl-CoA to form malonyl-CoA. The protein is Acetyl-coenzyme A carboxylase carboxyl transferase subunit alpha of Bartonella tribocorum (strain CIP 105476 / IBS 506).